Here is a 647-residue protein sequence, read N- to C-terminus: DNA ligase (647 aa).

NAD(+) contacts are provided by residues 30-34 (DEEYD), 79-80 (SM), and glutamate 105. Lysine 107 acts as the N6-AMP-lysine intermediate in catalysis. Arginine 128, glutamate 162, and lysine 301 together coordinate NAD(+). Zn(2+) contacts are provided by cysteine 395, cysteine 398, cysteine 411, and cysteine 416. A BRCT domain is found at 570–647 (KSDGVIFGKT…ESAFNELVKE (78 aa)).

This sequence belongs to the NAD-dependent DNA ligase family. LigA subfamily. It depends on Mg(2+) as a cofactor. The cofactor is Mn(2+).

It catalyses the reaction NAD(+) + (deoxyribonucleotide)n-3'-hydroxyl + 5'-phospho-(deoxyribonucleotide)m = (deoxyribonucleotide)n+m + AMP + beta-nicotinamide D-nucleotide.. Its function is as follows. DNA ligase that catalyzes the formation of phosphodiester linkages between 5'-phosphoryl and 3'-hydroxyl groups in double-stranded DNA using NAD as a coenzyme and as the energy source for the reaction. It is essential for DNA replication and repair of damaged DNA. The polypeptide is DNA ligase (Campylobacter jejuni subsp. jejuni serotype O:6 (strain 81116 / NCTC 11828)).